The chain runs to 147 residues: Cyanate hydratase (147 aa).

Residues arginine 88, glutamate 91, and serine 114 contribute to the active site.

Belongs to the cyanase family.

The enzyme catalyses cyanate + hydrogencarbonate + 3 H(+) = NH4(+) + 2 CO2. In terms of biological role, catalyzes the reaction of cyanate with bicarbonate to produce ammonia and carbon dioxide. The polypeptide is Cyanate hydratase (Prochlorococcus marinus (strain NATL2A)).